Reading from the N-terminus, the 136-residue chain is Nucleoside diphosphate kinase (136 aa).

6 residues coordinate ATP: lysine 10, phenylalanine 58, arginine 86, threonine 92, arginine 104, and asparagine 114. Residue histidine 117 is the Pros-phosphohistidine intermediate of the active site.

The protein belongs to the NDK family. As to quaternary structure, homotetramer. Mg(2+) serves as cofactor.

It localises to the cytoplasm. It carries out the reaction a 2'-deoxyribonucleoside 5'-diphosphate + ATP = a 2'-deoxyribonucleoside 5'-triphosphate + ADP. It catalyses the reaction a ribonucleoside 5'-diphosphate + ATP = a ribonucleoside 5'-triphosphate + ADP. Major role in the synthesis of nucleoside triphosphates other than ATP. The ATP gamma phosphate is transferred to the NDP beta phosphate via a ping-pong mechanism, using a phosphorylated active-site intermediate. This Mycobacterium sp. (strain MCS) protein is Nucleoside diphosphate kinase.